The chain runs to 137 residues: Venom allergen 4 (137 aa).

The signal sequence occupies residues 1 to 19 (MKTFVLVSCLLVFTQIIYA).

This sequence belongs to the ant venom allergen 2/4 family. As to quaternary structure, monomer. As to expression, expressed by the venom gland.

It is found in the secreted. The sequence is that of Venom allergen 4 from Solenopsis geminata (Tropical fire ant).